A 261-amino-acid polypeptide reads, in one-letter code: MTHQSHAYHMVKPSPWPLTGALSALLMTSGLAMWFHFYSTTLLTLGLLTNTLTMYQWWRDVMREGTYQGHHTPPVQKGLRYGMILFITSEVFFFAGFFWAFYHSSLAPTPQLGGHWPPTGITPLNPLEVPLLNTSVLLASGVSITWAHHSLMENNRNQMIQALLITILLGLYFTLLQASEYFESPFTISDGIYGSTFFVATGFHGLHVIIGSTFLTICLIRQLMFHFTSKHHFGFQAAAWYWHFVDVVWLFLYVSIYWWGS.

The Mitochondrial matrix segment spans residues 1–15; it reads MTHQSHAYHMVKPSP. Residues 16–34 form a helical membrane-spanning segment; that stretch reads WPLTGALSALLMTSGLAMW. Residues 35-40 are Mitochondrial intermembrane-facing; the sequence is FHFYST. The chain crosses the membrane as a helical span at residues 41-66; it reads TLLTLGLLTNTLTMYQWWRDVMREGT. Residues 67 to 72 are Mitochondrial matrix-facing; that stretch reads YQGHHT. A helical membrane pass occupies residues 73-105; sequence PPVQKGLRYGMILFITSEVFFFAGFFWAFYHSS. Residues 106 to 128 lie on the Mitochondrial intermembrane side of the membrane; sequence LAPTPQLGGHWPPTGITPLNPLE. A helical membrane pass occupies residues 129–152; that stretch reads VPLLNTSVLLASGVSITWAHHSLM. The Mitochondrial matrix segment spans residues 153–155; the sequence is ENN. The chain crosses the membrane as a helical span at residues 156-183; the sequence is RNQMIQALLITILLGLYFTLLQASEYFE. Over 184 to 190 the chain is Mitochondrial intermembrane; sequence SPFTISD. Residues 191 to 223 traverse the membrane as a helical segment; the sequence is GIYGSTFFVATGFHGLHVIIGSTFLTICLIRQL. Topologically, residues 224–232 are mitochondrial matrix; that stretch reads MFHFTSKHH. Residues 233–256 form a helical membrane-spanning segment; it reads FGFQAAAWYWHFVDVVWLFLYVSI. Over 257 to 261 the chain is Mitochondrial intermembrane; the sequence is YWWGS.

The protein belongs to the cytochrome c oxidase subunit 3 family. Component of the cytochrome c oxidase (complex IV, CIV), a multisubunit enzyme composed of 14 subunits. The complex is composed of a catalytic core of 3 subunits MT-CO1, MT-CO2 and MT-CO3, encoded in the mitochondrial DNA, and 11 supernumerary subunits COX4I, COX5A, COX5B, COX6A, COX6B, COX6C, COX7A, COX7B, COX7C, COX8 and NDUFA4, which are encoded in the nuclear genome. The complex exists as a monomer or a dimer and forms supercomplexes (SCs) in the inner mitochondrial membrane with NADH-ubiquinone oxidoreductase (complex I, CI) and ubiquinol-cytochrome c oxidoreductase (cytochrome b-c1 complex, complex III, CIII), resulting in different assemblies (supercomplex SCI(1)III(2)IV(1) and megacomplex MCI(2)III(2)IV(2)).

It is found in the mitochondrion inner membrane. The catalysed reaction is 4 Fe(II)-[cytochrome c] + O2 + 8 H(+)(in) = 4 Fe(III)-[cytochrome c] + 2 H2O + 4 H(+)(out). Its function is as follows. Component of the cytochrome c oxidase, the last enzyme in the mitochondrial electron transport chain which drives oxidative phosphorylation. The respiratory chain contains 3 multisubunit complexes succinate dehydrogenase (complex II, CII), ubiquinol-cytochrome c oxidoreductase (cytochrome b-c1 complex, complex III, CIII) and cytochrome c oxidase (complex IV, CIV), that cooperate to transfer electrons derived from NADH and succinate to molecular oxygen, creating an electrochemical gradient over the inner membrane that drives transmembrane transport and the ATP synthase. Cytochrome c oxidase is the component of the respiratory chain that catalyzes the reduction of oxygen to water. Electrons originating from reduced cytochrome c in the intermembrane space (IMS) are transferred via the dinuclear copper A center (CU(A)) of subunit 2 and heme A of subunit 1 to the active site in subunit 1, a binuclear center (BNC) formed by heme A3 and copper B (CU(B)). The BNC reduces molecular oxygen to 2 water molecules using 4 electrons from cytochrome c in the IMS and 4 protons from the mitochondrial matrix. The polypeptide is Cytochrome c oxidase subunit 3 (MT-CO3) (Pan troglodytes (Chimpanzee)).